Here is a 132-residue protein sequence, read N- to C-terminus: uncharacterized protein (132 aa).

The N-terminal stretch at 1-17 is a signal peptide; sequence MCPECFFLMLFFCGYRA. The span at 25-39 shows a compositional bias: low complexity; sequence SSSSSSSSSSSFRSS. The tract at residues 25–79 is disordered; the sequence is SSSSSSSSSSSFRSSPAYGFSGRPPGGAGCRERSQRSCLRPGGLPSLTRNPGLQR.

This is an uncharacterized protein from Escherichia coli (strain K12).